The primary structure comprises 378 residues: Chaperone protein DnaJ 1 (378 aa).

Residues 4 to 68 (DYYGILGVDR…DKRRIVDMGG (65 aa)) form the J domain. A CR-type zinc finger spans residues 129-211 (GVKKDLTLDT…CAGDGRVRAR (83 aa)). The Zn(2+) site is built by Cys-142, Cys-145, Cys-159, Cys-162, Cys-185, Cys-188, Cys-199, and Cys-202. 4 CXXCXGXG motif repeats span residues 142-149 (CSKCHGSG), 159-166 (CGTCHGSG), 185-192 (CHTCNGTG), and 199-206 (CDECAGDG).

This sequence belongs to the DnaJ family. Homodimer. Requires Zn(2+) as cofactor.

Its subcellular location is the cytoplasm. Functionally, participates actively in the response to hyperosmotic and heat shock by preventing the aggregation of stress-denatured proteins and by disaggregating proteins, also in an autonomous, DnaK-independent fashion. Unfolded proteins bind initially to DnaJ; upon interaction with the DnaJ-bound protein, DnaK hydrolyzes its bound ATP, resulting in the formation of a stable complex. GrpE releases ADP from DnaK; ATP binding to DnaK triggers the release of the substrate protein, thus completing the reaction cycle. Several rounds of ATP-dependent interactions between DnaJ, DnaK and GrpE are required for fully efficient folding. Also involved, together with DnaK and GrpE, in the DNA replication of plasmids through activation of initiation proteins. This chain is Chaperone protein DnaJ 1, found in Corynebacterium efficiens (strain DSM 44549 / YS-314 / AJ 12310 / JCM 11189 / NBRC 100395).